Reading from the N-terminus, the 537-residue chain is Cryptic loci regulator 2 (537 aa).

Residues V96 to P116 are disordered. Over residues S107–P116 the composition is skewed to basic and acidic residues.

Interacts with clr3.

It is found in the nucleus. It localises to the chromosome. The protein resides in the centromere. Its subcellular location is the telomere. Required for deacetylation in the mating-type region and the centromere. Acts upstream of the histone deacetylases to promote transcriptional silencing. Required for proper positioning of nucleosomes at heterochromatic loci and for transcriptional gene silencing (TGS) function of the Snf2/Hdac-containing repressor complex (SHREC). The protein is Cryptic loci regulator 2 (clr2) of Schizosaccharomyces pombe (strain 972 / ATCC 24843) (Fission yeast).